A 266-amino-acid chain; its full sequence is Glutamate racemase (266 aa).

Substrate contacts are provided by residues Asp-9–Ser-10 and Tyr-41–Gly-42. Cys-73 serves as the catalytic Proton donor/acceptor. Asn-74–Ser-75 provides a ligand contact to substrate. Catalysis depends on Cys-183, which acts as the Proton donor/acceptor. Thr-184 to His-185 is a substrate binding site.

It belongs to the aspartate/glutamate racemases family.

The catalysed reaction is L-glutamate = D-glutamate. Its pathway is cell wall biogenesis; peptidoglycan biosynthesis. Functionally, provides the (R)-glutamate required for cell wall biosynthesis. This chain is Glutamate racemase, found in Shewanella halifaxensis (strain HAW-EB4).